Here is a 406-residue protein sequence, read N- to C-terminus: NADH-ubiquinone oxidoreductase 49 kDa subunit (406 aa).

The protein belongs to the complex I 49 kDa subunit family. As to quaternary structure, complex I is composed of 45 different subunits. Component of the iron-sulfur (IP) fragment of the enzyme.

The protein resides in the mitochondrion inner membrane. The catalysed reaction is a ubiquinone + NADH + 5 H(+)(in) = a ubiquinol + NAD(+) + 4 H(+)(out). Core subunit of the mitochondrial membrane respiratory chain NADH dehydrogenase (Complex I) that is believed to belong to the minimal assembly required for catalysis. Complex I functions in the transfer of electrons from NADH to the respiratory chain. The immediate electron acceptor for the enzyme is believed to be ubiquinone. This is NADH-ubiquinone oxidoreductase 49 kDa subunit (nad7) from Dictyostelium discoideum (Social amoeba).